The chain runs to 129 residues: Thyroid hormone receptor alpha (129 aa).

Residues Ala-26–Arg-129 form the NR LBD domain. Position 91 (Arg-91) interacts with 3,3',5-triiodo-L-thyronine.

The protein belongs to the nuclear hormone receptor family. NR1 subfamily.

Its subcellular location is the nucleus. In terms of biological role, nuclear hormone receptor that can act as a repressor or activator of transcription. High affinity receptor for thyroid hormones, including triiodothyronine and thyroxine. The polypeptide is Thyroid hormone receptor alpha (thra1) (Sparus aurata (Gilthead sea bream)).